Here is a 504-residue protein sequence, read N- to C-terminus: MASIKATEISSLIKQQIDQFETTVNVQDVGTVIRVGDGIAFAHGLDNVMAGELLEFSTGVMGMAQNLEEDSVGIIILGPYTDIREGDEVKRTGRIMEVPVGSELLGRVVNPLGQPLDGLGPVHTSKTRPIESPAPGVMARKSVHEPLQTGIKSIDSMIPIGRGQRELIIGDRQTGKTAIAIDTIINQKDQDMICVYVAIGQKESTVSGVVETLRQRGALEYTIVVSASASDPAPLLFLAPYTGVSMAEEFMYNGKHVLVIYDDLSKQAAAYREMSLLLRRPPGREAFPGDVFYLHSRLLERAAKLNDDLGGGSITALPFIETQAGDVSAYIPTNVISITDGQVFLQSDLFHSGVRPAVNPGISVSRVGGSAQIKAMKKVAGTLRLDLAAYRELEAFAQFGSDLDAATQARLNRGERTVELLKQDLHQPLPVEKQVAIIYALTKGYLDDVPVADCRRFESELFTYLESNNNELLEHIRTTGNLPEESDLKAAIEAFKKGFVASNE.

Residue 170–177 participates in ATP binding; it reads GDRQTGKT.

Belongs to the ATPase alpha/beta chains family. As to quaternary structure, F-type ATPases have 2 components, CF(1) - the catalytic core - and CF(0) - the membrane proton channel. CF(1) has five subunits: alpha(3), beta(3), gamma(1), delta(1), epsilon(1). CF(0) has three main subunits: a(1), b(2) and c(9-12). The alpha and beta chains form an alternating ring which encloses part of the gamma chain. CF(1) is attached to CF(0) by a central stalk formed by the gamma and epsilon chains, while a peripheral stalk is formed by the delta and b chains.

It is found in the cell membrane. It catalyses the reaction ATP + H2O + 4 H(+)(in) = ADP + phosphate + 5 H(+)(out). Functionally, produces ATP from ADP in the presence of a proton gradient across the membrane. The alpha chain is a regulatory subunit. In Shouchella clausii (strain KSM-K16) (Alkalihalobacillus clausii), this protein is ATP synthase subunit alpha.